The sequence spans 321 residues: Putative glucan endo-1,3-beta-glucosidase GVI (321 aa).

An N-terminal signal peptide occupies residues 1–6 (LAGVEG). The active-site Proton donor is Glu100. Catalysis depends on Glu241, which acts as the Nucleophile.

Belongs to the glycosyl hydrolase 17 family.

The enzyme catalyses Hydrolysis of (1-&gt;3)-beta-D-glucosidic linkages in (1-&gt;3)-beta-D-glucans.. Functionally, may provide a degree of protection against microbial invasion of germinated barley grain through its ability to degrade fungal cell wall polysaccharides. The polypeptide is Putative glucan endo-1,3-beta-glucosidase GVI (Hordeum vulgare (Barley)).